We begin with the raw amino-acid sequence, 803 residues long: Carbon monoxide dehydrogenase large chain (803 aa).

Arg-384 carries the 4-hydroxyarginine modification. Cys-385 serves as a coordination point for Cu(+). Glu-757 is a binding site for Mo-molybdopterin cytosine dinucleotide.

As to quaternary structure, dimer of heterotrimers. Each heterotrimer consists of a large, a medium and a small subunit. Cu(+) serves as cofactor. Mo-molybdopterin cytosine dinucleotide is required as a cofactor.

It catalyses the reaction CO + a quinone + H2O = a quinol + CO2. Catalyzes the oxidation of carbon monoxide to carbon dioxide. This Hydrogenophaga pseudoflava (Pseudomonas carboxydoflava) protein is Carbon monoxide dehydrogenase large chain (cutL).